A 192-amino-acid chain; its full sequence is Probable metallophosphoesterase MJ0623 (192 aa).

7 residues coordinate a divalent metal cation: D41, H43, D70, N92, H115, H144, and H146.

Belongs to the metallophosphoesterase superfamily. YfcE family. Requires a divalent metal cation as cofactor.

The chain is Probable metallophosphoesterase MJ0623 from Methanocaldococcus jannaschii (strain ATCC 43067 / DSM 2661 / JAL-1 / JCM 10045 / NBRC 100440) (Methanococcus jannaschii).